We begin with the raw amino-acid sequence, 259 residues long: 5'-nucleotidase SurE (259 aa).

Residues Asp8, Asp9, Ser39, and Asn98 each contribute to the a divalent metal cation site.

This sequence belongs to the SurE nucleotidase family. A divalent metal cation is required as a cofactor.

The protein resides in the cytoplasm. The enzyme catalyses a ribonucleoside 5'-phosphate + H2O = a ribonucleoside + phosphate. In terms of biological role, nucleotidase that shows phosphatase activity on nucleoside 5'-monophosphates. This is 5'-nucleotidase SurE from Fervidobacterium nodosum (strain ATCC 35602 / DSM 5306 / Rt17-B1).